The chain runs to 277 residues: MRRLVRKTVSLPPSGAPLVEVADLNYSVSGRELLRNITFRLTDGELLAVLGRNGAGKSTLLRHLTGELGKEGVRMFGQPLREYAAADLARRRAALPQQTPLTFAYEVLDVVLLGRIPHGRRETPEDREIARAALARVGLAGFEHRNILTLSGGEQQRVHLARVLAQLWADPAAPEQPARVLLLDEPTSSLDLAHQHATLRLARELCTQGVGVIAVLHDLNLAAQYADRVLIVAGGRVTALGTPEAVLTPAIIEEAFGHRVAVTPHPCLNCPLIVSAQ.

The ABC transporter domain occupies 19 to 259 (VEVADLNYSV…AIIEEAFGHR (241 aa)). 51–58 (GRNGAGKS) is a binding site for ATP.

The protein belongs to the ABC transporter superfamily. Heme (hemin) importer (TC 3.A.1.14.5) family. As to quaternary structure, the complex is composed of two ATP-binding proteins (HmuV), two transmembrane proteins (HmuU) and a solute-binding protein (HmuT).

The protein resides in the cell membrane. Functionally, part of the ABC transporter complex HmuTUV involved in hemin import. Responsible for energy coupling to the transport system. The chain is Hemin import ATP-binding protein HmuV from Deinococcus geothermalis (strain DSM 11300 / CIP 105573 / AG-3a).